The sequence spans 116 residues: Large ribosomal subunit protein uL22c (116 aa).

Belongs to the universal ribosomal protein uL22 family. As to quaternary structure, part of the 50S ribosomal subunit.

It localises to the plastid. Its subcellular location is the chloroplast. This protein binds specifically to 23S rRNA. Functionally, the globular domain of the protein is located near the polypeptide exit tunnel on the outside of the subunit, while an extended beta-hairpin is found that lines the wall of the exit tunnel in the center of the 70S ribosome. The sequence is that of Large ribosomal subunit protein uL22c (rpl22) from Euglena gracilis.